Consider the following 118-residue polypeptide: MGKLSTHVLDTAHGTPAAAMRVELYRIAASGTPELLKRVVTNLDGRTDAPLLSGDEMRTGIYELQFHVAEYFEGRGAELAHEPFLDLIPIRFGIADEDGNYHVPLLVSPWSYSTYRGS.

Residues histidine 7, arginine 46, and tyrosine 115 each coordinate substrate.

This sequence belongs to the transthyretin family. 5-hydroxyisourate hydrolase subfamily. In terms of assembly, homotetramer.

The enzyme catalyses 5-hydroxyisourate + H2O = 5-hydroxy-2-oxo-4-ureido-2,5-dihydro-1H-imidazole-5-carboxylate + H(+). Functionally, catalyzes the hydrolysis of 5-hydroxyisourate (HIU) to 2-oxo-4-hydroxy-4-carboxy-5-ureidoimidazoline (OHCU). This is 5-hydroxyisourate hydrolase from Brucella melitensis biotype 1 (strain ATCC 23456 / CCUG 17765 / NCTC 10094 / 16M).